Here is a 276-residue protein sequence, read N- to C-terminus: Adenylate kinase (276 aa).

51-56 (GAGKGT) provides a ligand contact to ATP. The tract at residues 71-100 (ATGDMLRSQVAKKTPLGQAAKKIMDAGGLV) is NMP. AMP-binding positions include threonine 72, arginine 77, 98-100 (GLV), 127-130 (GFPR), and glutamine 134. Residues 168–205 (GRLVHPASGRSYHVKFNPPKKEMTDDITGEPLIQRSDD) are LID. Residues arginine 169 and 178–179 (SY) contribute to the ATP site. AMP contacts are provided by arginine 202 and arginine 213. Glutamine 241 serves as a coordination point for ATP.

Belongs to the adenylate kinase family. AK2 subfamily. In terms of assembly, monomer.

It localises to the cytoplasm. The protein resides in the cytosol. It is found in the mitochondrion intermembrane space. The catalysed reaction is AMP + ATP = 2 ADP. In terms of biological role, catalyzes the reversible transfer of the terminal phosphate group between ATP and AMP. Plays an important role in cellular energy homeostasis and in adenine nucleotide metabolism. Adenylate kinase activity is critical for regulation of the phosphate utilization and the AMP de novo biosynthesis pathways. This chain is Adenylate kinase, found in Podospora anserina (strain S / ATCC MYA-4624 / DSM 980 / FGSC 10383) (Pleurage anserina).